Here is a 446-residue protein sequence, read N- to C-terminus: Phosphoglucosamine mutase (446 aa).

The active-site Phosphoserine intermediate is the Ser101. Residues Ser101, Asp240, Asp242, and Asp244 each contribute to the Mg(2+) site. A Phosphoserine modification is found at Ser101.

This sequence belongs to the phosphohexose mutase family. Mg(2+) is required as a cofactor. Activated by phosphorylation.

It carries out the reaction alpha-D-glucosamine 1-phosphate = D-glucosamine 6-phosphate. Its function is as follows. Catalyzes the conversion of glucosamine-6-phosphate to glucosamine-1-phosphate. The chain is Phosphoglucosamine mutase from Pseudomonas putida (strain ATCC 47054 / DSM 6125 / CFBP 8728 / NCIMB 11950 / KT2440).